The sequence spans 92 residues: Small ribosomal subunit protein uS19 (92 aa).

It belongs to the universal ribosomal protein uS19 family.

Protein S19 forms a complex with S13 that binds strongly to the 16S ribosomal RNA. This Orientia tsutsugamushi (strain Boryong) (Rickettsia tsutsugamushi) protein is Small ribosomal subunit protein uS19.